The primary structure comprises 54 residues: ATP synthase F(0) complex subunit 8 (54 aa).

Residues 4 to 24 form a helical membrane-spanning segment; the sequence is LNPGPWFAILVFSWLIFLTII. Residues 35-54 form a disordered region; that stretch reads NEPTPVSAEKHKTESWDWPW. The segment covering 42-54 has biased composition (basic and acidic residues); that stretch reads AEKHKTESWDWPW.

The protein belongs to the ATPase protein 8 family. In terms of assembly, component of the ATP synthase complex composed at least of ATP5F1A/subunit alpha, ATP5F1B/subunit beta, ATP5MC1/subunit c (homooctomer), MT-ATP6/subunit a, MT-ATP8/subunit 8, ATP5ME/subunit e, ATP5MF/subunit f, ATP5MG/subunit g, ATP5MK/subunit k, ATP5MJ/subunit j, ATP5F1C/subunit gamma, ATP5F1D/subunit delta, ATP5F1E/subunit epsilon, ATP5PF/subunit F6, ATP5PB/subunit b, ATP5PD/subunit d, ATP5PO/subunit OSCP. ATP synthase complex consists of a soluble F(1) head domain (subunits alpha(3) and beta(3)) - the catalytic core - and a membrane F(0) domain - the membrane proton channel (subunits c, a, 8, e, f, g, k and j). These two domains are linked by a central stalk (subunits gamma, delta, and epsilon) rotating inside the F1 region and a stationary peripheral stalk (subunits F6, b, d, and OSCP).

It localises to the mitochondrion membrane. Subunit 8, of the mitochondrial membrane ATP synthase complex (F(1)F(0) ATP synthase or Complex V) that produces ATP from ADP in the presence of a proton gradient across the membrane which is generated by electron transport complexes of the respiratory chain. ATP synthase complex consist of a soluble F(1) head domain - the catalytic core - and a membrane F(1) domain - the membrane proton channel. These two domains are linked by a central stalk rotating inside the F(1) region and a stationary peripheral stalk. During catalysis, ATP synthesis in the catalytic domain of F(1) is coupled via a rotary mechanism of the central stalk subunits to proton translocation. In vivo, can only synthesize ATP although its ATP hydrolase activity can be activated artificially in vitro. Part of the complex F(0) domain. The polypeptide is ATP synthase F(0) complex subunit 8 (Cyprinus carpio (Common carp)).